Reading from the N-terminus, the 580-residue chain is uncharacterized protein (580 aa).

A PE-PPE domain is found at 300-525 (PGYTATFLET…LRVLVELGYD (226 aa)).

The protein belongs to the mycobacterial PPE family.

This is an uncharacterized protein from Mycobacterium tuberculosis (strain CDC 1551 / Oshkosh).